Reading from the N-terminus, the 371-residue chain is Cytoplasmic tRNA 2-thiolation protein 1 (371 aa).

This sequence belongs to the TtcA family. CTU1/NCS6/ATPBD3 subfamily.

It localises to the cytoplasm. It participates in tRNA modification; 5-methoxycarbonylmethyl-2-thiouridine-tRNA biosynthesis. Functionally, plays a central role in 2-thiolation of mcm(5)S(2)U at tRNA wobble positions of tRNA(Lys), tRNA(Glu) and tRNA(Gln). Directly binds tRNAs and probably acts by catalyzing adenylation of tRNAs, an intermediate required for 2-thiolation. It is unclear whether it acts as a sulfurtransferase that transfers sulfur from thiocarboxylated URM1 onto the uridine of tRNAs at wobble position. Prior mcm(5) tRNA modification by the elongator complex is required for 2-thiolation. May also be involved in protein urmylation. The protein is Cytoplasmic tRNA 2-thiolation protein 1 of Kluyveromyces lactis (strain ATCC 8585 / CBS 2359 / DSM 70799 / NBRC 1267 / NRRL Y-1140 / WM37) (Yeast).